A 519-amino-acid chain; its full sequence is FAD-dependent monooxygenase macF (519 aa).

An N-terminal signal peptide occupies residues 1–20 (MTKMTSIIGILMGVLTTATA). Residues 88-262 (CRLNASCIVT…TEYDLTTNTG (175 aa)) form the FAD-binding PCMH-type domain. A Pros-8alpha-FAD histidine modification is found at H125.

The protein belongs to the oxygen-dependent FAD-linked oxidoreductase family.

Its pathway is secondary metabolite biosynthesis; terpenoid biosynthesis. FAD-dependent monooxygenase; part of the gene cluster that mediates the biosynthesis of macrophorins, isoprenoid epoxycyclohexenones containing cyclized drimane moieties. The first step of the pathway is the synthesis of 6-methylsalicylic acid (6-MSA) by the polyketide synthase macA. 6-MSA is then converted to m-cresol by the decarboxylase macB. The cytochrome P450 monooxygenase macC then catalyzes the oxidation of m-cresol to toluquinol. Epoxidation of toluquinol is then performed by the short chain dehydrogenase macD, with the help of macE, and a further prenylation by macG leads to 7-deacetoxyyanuthone A. The next step is the hydroxylation of C-22 of 7-deacetoxyyanuthone A by the cytochrome P450 monooxygenase macH to yield 22-deacetylyanuthone A. O-Mevalon transferase macI then attaches mevalon to the hydroxyl group of 22-deacetylyanuthone A to produce yanuthone E. The terpene cyclase macJ catalyzes the cyclization of 22-deacetylyanuthone A to macrophorin A. MacJ is also able to catalyze cyclization of yanuthone E and 7-deacetoxyyanuthone A to their corresponding macrophorins. The macJ products can be further modified by macH and macJ, as well as by the FAD-dependent monooxygenase macF, to produce additional macrophorins, including 4'-oxomacrophorin A, 4'-oxomacrophorin D and 4'-oxomacrophorin E. The chain is FAD-dependent monooxygenase macF from Penicillium terrestre.